A 243-amino-acid polypeptide reads, in one-letter code: DUF724 domain-containing protein 5 (243 aa).

The segment covering 1-24 (MREKHYSEDNSRKRKRGELEHNSD) has biased composition (basic and acidic residues). Positions 1–51 (MREKHYSEDNSRKRKRGELEHNSDLNETVLPSDWTPDPVKNFAADDDDEET) are disordered. Positions 59–243 (VLPFVKKSPV…DLGVELEDVE (185 aa)) constitute a DUF724 domain. Residues 174 to 223 (KEMKDESSKKHKAEQEFGEMERKILEVKNKVLELQKQEAALEKQKDATYE) are a coiled coil.

Homodimer. As to expression, expressed in leaves, flowers and siliques.

It localises to the nucleus. In terms of biological role, may be involved in the polar growth of plant cells via transportation of RNAs. This chain is DUF724 domain-containing protein 5, found in Arabidopsis thaliana (Mouse-ear cress).